A 521-amino-acid polypeptide reads, in one-letter code: MESSCKSWLLCSILVLVAFSLVSASEDEERLVRDLFRGYNKLIRPVQNMTQKVGVRFGLAFVQLINVNEKNQVMKSNVWLRLVWYDYQLQWDEADYGGIGVLRLPPDKVWKPDIVLFNNADGNYEVRYKSNVLIYPTGEVLWVPPAIYQSSCTIDVTYFPFDQQTCIMKFGSWTFNGDQVSLALYNNKNFVDLSDYWKSGTWDIIEVPAYLNVYEGDSNHPTETDITFYIIIRRKTLFYTVNLILPTVLISFLCVLVFYLPAEAGEKVTLGISILLSLVVFLLLVSKILPPTSLVLPLIAKYLLFTFIMNTVSILVTVIIINWNFRGPRTHRMPMYIRSIFLHYLPAFLFMKRPRKTRLRWMMEMPGMSMPAHPHPSYGSPAELPKHISAIGGKQSKMEVMELSDLHHPNCKINRKVNSGGELGLGDGCRRESESSDSILLSPEASKATEAVEFIAEHLRNEDLYIQTREDWKYVAMVIDRLQLYIFFIVTTAGTVGILMDAPHIFEYVDQDRIIEIYRGK.

A signal peptide spans 1-24 (MESSCKSWLLCSILVLVAFSLVSA). The Extracellular portion of the chain corresponds to 25 to 235 (SEDEERLVRD…ITFYIIIRRK (211 aa)). Residue N48 is glycosylated (N-linked (GlcNAc...) asparagine). An intrachain disulfide couples C152 to C166. 3 consecutive transmembrane segments (helical) span residues 236-260 (TLFY…VFYL), 268-286 (VTLG…LLVS), and 302-323 (YLLF…IINW). The Cytoplasmic portion of the chain corresponds to 324–481 (NFRGPRTHRM…WKYVAMVIDR (158 aa)). Residues 482–500 (LQLYIFFIVTTAGTVGILM) form a helical membrane-spanning segment.

Belongs to the ligand-gated ion channel (TC 1.A.9) family. Acetylcholine receptor (TC 1.A.9.1) subfamily. As to expression, CNS in embryos.

The protein localises to the postsynaptic cell membrane. It is found in the cell membrane. In terms of biological role, after binding acetylcholine, the AChR responds by an extensive change in conformation that affects all subunits and leads to opening of an ion-conducting channel across the plasma membrane. The polypeptide is Acetylcholine receptor subunit beta-like 1 (nAChRbeta1) (Drosophila melanogaster (Fruit fly)).